Reading from the N-terminus, the 392-residue chain is Methylthioribose-1-phosphate isomerase (392 aa).

D267 serves as the catalytic Proton donor.

It belongs to the eIF-2B alpha/beta/delta subunits family. MtnA subfamily.

The protein localises to the cytoplasm. It is found in the nucleus. It catalyses the reaction 5-(methylsulfanyl)-alpha-D-ribose 1-phosphate = 5-(methylsulfanyl)-D-ribulose 1-phosphate. The protein operates within amino-acid biosynthesis; L-methionine biosynthesis via salvage pathway; L-methionine from S-methyl-5-thio-alpha-D-ribose 1-phosphate: step 1/6. In terms of biological role, catalyzes the interconversion of methylthioribose-1-phosphate (MTR-1-P) into methylthioribulose-1-phosphate (MTRu-1-P). In Ajellomyces dermatitidis (strain ER-3 / ATCC MYA-2586) (Blastomyces dermatitidis), this protein is Methylthioribose-1-phosphate isomerase.